We begin with the raw amino-acid sequence, 716 residues long: Phosphoribosylformylglycinamidine synthase subunit PurL (716 aa).

The active site involves H33. Residue Y36 coordinates ATP. Position 77 (E77) interacts with Mg(2+). Residues 78-81 (SHNH) and R100 each bind substrate. H79 acts as the Proton acceptor in catalysis. Position 101 (D101) interacts with Mg(2+). Position 225 (Q225) interacts with substrate. D253 lines the Mg(2+) pocket. A substrate-binding site is contributed by 297-299 (ESQ). ATP-binding residues include N475 and G512. N513 provides a ligand contact to Mg(2+). S515 lines the substrate pocket.

Belongs to the FGAMS family. As to quaternary structure, monomer. Part of the FGAM synthase complex composed of 1 PurL, 1 PurQ and 2 PurS subunits.

It is found in the cytoplasm. The enzyme catalyses N(2)-formyl-N(1)-(5-phospho-beta-D-ribosyl)glycinamide + L-glutamine + ATP + H2O = 2-formamido-N(1)-(5-O-phospho-beta-D-ribosyl)acetamidine + L-glutamate + ADP + phosphate + H(+). The protein operates within purine metabolism; IMP biosynthesis via de novo pathway; 5-amino-1-(5-phospho-D-ribosyl)imidazole from N(2)-formyl-N(1)-(5-phospho-D-ribosyl)glycinamide: step 1/2. In terms of biological role, part of the phosphoribosylformylglycinamidine synthase complex involved in the purines biosynthetic pathway. Catalyzes the ATP-dependent conversion of formylglycinamide ribonucleotide (FGAR) and glutamine to yield formylglycinamidine ribonucleotide (FGAM) and glutamate. The FGAM synthase complex is composed of three subunits. PurQ produces an ammonia molecule by converting glutamine to glutamate. PurL transfers the ammonia molecule to FGAR to form FGAM in an ATP-dependent manner. PurS interacts with PurQ and PurL and is thought to assist in the transfer of the ammonia molecule from PurQ to PurL. This chain is Phosphoribosylformylglycinamidine synthase subunit PurL, found in Methanosarcina mazei (strain ATCC BAA-159 / DSM 3647 / Goe1 / Go1 / JCM 11833 / OCM 88) (Methanosarcina frisia).